We begin with the raw amino-acid sequence, 508 residues long: Glycerol kinase (508 aa).

Thr15 lines the ADP pocket. ATP-binding residues include Thr15, Ser16, and Ser17. Sn-glycerol 3-phosphate is bound at residue Thr15. Arg19 contacts ADP. Sn-glycerol 3-phosphate contacts are provided by Arg85, Glu86, Tyr138, and Asp251. The glycerol site is built by Arg85, Glu86, Tyr138, Asp251, and Gln252. Residues Thr273, Gly317, and Gly419 each contribute to the ADP site. ATP-binding residues include Thr273, Gly317, and Gly419.

Belongs to the FGGY kinase family.

It catalyses the reaction glycerol + ATP = sn-glycerol 3-phosphate + ADP + H(+). It functions in the pathway polyol metabolism; glycerol degradation via glycerol kinase pathway; sn-glycerol 3-phosphate from glycerol: step 1/1. Inhibited by fructose 1,6-bisphosphate (FBP). Its function is as follows. Key enzyme in the regulation of glycerol uptake and metabolism. Catalyzes the phosphorylation of glycerol to yield sn-glycerol 3-phosphate. The protein is Glycerol kinase of Mycoplasma genitalium (strain ATCC 33530 / DSM 19775 / NCTC 10195 / G37) (Mycoplasmoides genitalium).